Reading from the N-terminus, the 147-residue chain is Large ribosomal subunit protein bL9 (147 aa).

Belongs to the bacterial ribosomal protein bL9 family.

Functionally, binds to the 23S rRNA. The sequence is that of Large ribosomal subunit protein bL9 from Thermodesulfovibrio yellowstonii (strain ATCC 51303 / DSM 11347 / YP87).